Here is a 64-residue protein sequence, read N- to C-terminus: Large ribosomal subunit protein bL35 (64 aa).

Residues 38 to 53 show a composition bias toward basic residues; it reads KRKANLNAPKHVHHTN. The interval 38-64 is disordered; the sequence is KRKANLNAPKHVHHTNAHSVMSLLCRA.

This sequence belongs to the bacterial ribosomal protein bL35 family.

This is Large ribosomal subunit protein bL35 from Helicobacter pylori (strain G27).